The sequence spans 494 residues: Lysine--tRNA ligase (494 aa).

Residues Glu405 and Glu412 each coordinate Mg(2+).

The protein belongs to the class-II aminoacyl-tRNA synthetase family. As to quaternary structure, homodimer. The cofactor is Mg(2+).

It localises to the cytoplasm. The enzyme catalyses tRNA(Lys) + L-lysine + ATP = L-lysyl-tRNA(Lys) + AMP + diphosphate. In Geobacillus stearothermophilus (Bacillus stearothermophilus), this protein is Lysine--tRNA ligase (lysS).